The following is a 315-amino-acid chain: Ribosomal RNA small subunit methyltransferase H (315 aa).

Residues 37 to 39 (GGH), D57, F83, D105, and Q112 each bind S-adenosyl-L-methionine.

The protein belongs to the methyltransferase superfamily. RsmH family.

The protein localises to the cytoplasm. It catalyses the reaction cytidine(1402) in 16S rRNA + S-adenosyl-L-methionine = N(4)-methylcytidine(1402) in 16S rRNA + S-adenosyl-L-homocysteine + H(+). Specifically methylates the N4 position of cytidine in position 1402 (C1402) of 16S rRNA. This is Ribosomal RNA small subunit methyltransferase H from Pseudomonas putida (strain ATCC 700007 / DSM 6899 / JCM 31910 / BCRC 17059 / LMG 24140 / F1).